Consider the following 102-residue polypeptide: Alpha-hemoglobin-stabilizing protein (102 aa).

It belongs to the AHSP family. In terms of assembly, monomer. Forms a heterodimer with free alpha-hemoglobin. Does not bind beta-hemoglobin nor alpha(2)beta(2) hemoglobin A. In terms of tissue distribution, expressed in blood and bone marrow.

Its subcellular location is the cytoplasm. Its function is as follows. Acts as a chaperone to prevent the harmful aggregation of alpha-hemoglobin during normal erythroid cell development. Specifically protects free alpha-hemoglobin from precipitation. It is predicted to modulate pathological states of alpha-hemoglobin excess such as beta-thalassemia. The polypeptide is Alpha-hemoglobin-stabilizing protein (AHSP) (Homo sapiens (Human)).